Reading from the N-terminus, the 371-residue chain is MLKEFEIEPLLKDKVPHQTKAVVAMSGGVDSSVAAVLLHRLGYQVIGVTLQLYGADGNSNTRKKGVCCAGQDIYDAKRVAEGTGFPHYILNYEEIFKKEVIESFAQTYIQGKTPIPCIKCNQTVKFRDLLQVTRNLGADVLITGHYVRRLEKNGEVKLCRGIDKSKDQSYFLFATTKEQLKLLRFPLGGFYKCNVRKLARYFSLPISEKPDSQDICFVSENYSKTIAKLAPQSIQKGKIVDVNGKVLGEHNGIVNFTVGQRKGLGIAYSEPLYVVRINTKNNEIVVGPVNALMQRKILVKELNWLEQPKKGMEVTVKLRSLHSGSLAKIYPAKEQNKAYVILNDDYFSISPGQACVAYKDEQVIGGGWICS.

ATP is bound by residues alanine 24 to serine 31 and leucine 50. Cysteine 120 (nucleophile) is an active-site residue. A disulfide bridge connects residues cysteine 120 and cysteine 216. Position 144 (glycine 144) interacts with ATP. The segment at lysine 166 to glutamine 168 is interaction with tRNA. Residue cysteine 216 is the Cysteine persulfide intermediate of the active site.

This sequence belongs to the MnmA/TRMU family.

The protein localises to the cytoplasm. The enzyme catalyses S-sulfanyl-L-cysteinyl-[protein] + uridine(34) in tRNA + AH2 + ATP = 2-thiouridine(34) in tRNA + L-cysteinyl-[protein] + A + AMP + diphosphate + H(+). In terms of biological role, catalyzes the 2-thiolation of uridine at the wobble position (U34) of tRNA, leading to the formation of s(2)U34. This is tRNA-specific 2-thiouridylase MnmA from Wolbachia sp. subsp. Brugia malayi (strain TRS).